The following is a 271-amino-acid chain: uncharacterized protein (271 aa).

Solcar repeat units follow at residues 3-74 (VQTL…AKRR), 81-163 (EGAI…SKKY), and 171-268 (DISV…FKSK). The next 6 membrane-spanning stretches (helical) occupy residues 5 to 26 (TLMA…IDTI), 49 to 69 (GLPI…STYV), 84 to 104 (ILYS…WTPL), 138 to 158 (GYWM…VCYE), 170 to 190 (WDIS…ATTI), and 240 to 261 (FTRG…SMSV).

Belongs to the mitochondrial carrier (TC 2.A.29) family.

The protein resides in the mitochondrion inner membrane. This is an uncharacterized protein from Schizosaccharomyces pombe (strain 972 / ATCC 24843) (Fission yeast).